The following is a 349-amino-acid chain: Phosphoribosylformylglycinamidine cyclo-ligase (349 aa).

Belongs to the AIR synthase family.

It localises to the cytoplasm. The catalysed reaction is 2-formamido-N(1)-(5-O-phospho-beta-D-ribosyl)acetamidine + ATP = 5-amino-1-(5-phospho-beta-D-ribosyl)imidazole + ADP + phosphate + H(+). The protein operates within purine metabolism; IMP biosynthesis via de novo pathway; 5-amino-1-(5-phospho-D-ribosyl)imidazole from N(2)-formyl-N(1)-(5-phospho-D-ribosyl)glycinamide: step 2/2. The protein is Phosphoribosylformylglycinamidine cyclo-ligase of Bordetella avium (strain 197N).